A 218-amino-acid polypeptide reads, in one-letter code: NAD(P)H-quinone oxidoreductase subunit I (218 aa).

4Fe-4S ferredoxin-type domains lie at 55-84 (GRIHYEFDKCIACEVCVRVCPINLPVVDWV) and 95-124 (RNYSIDFGVCIFCGNCVEYCPTNCLSMTEE). [4Fe-4S] cluster is bound by residues Cys-64, Cys-67, Cys-70, Cys-74, Cys-104, Cys-107, Cys-110, and Cys-114. The segment at 192–218 (LSLQQDSLQGDEGESLQDAPDQDQPKG) is disordered.

This sequence belongs to the complex I 23 kDa subunit family. As to quaternary structure, NDH-1 is composed of at least 11 different subunits. It depends on [4Fe-4S] cluster as a cofactor.

The protein resides in the cellular thylakoid membrane. It carries out the reaction a plastoquinone + NADH + (n+1) H(+)(in) = a plastoquinol + NAD(+) + n H(+)(out). The enzyme catalyses a plastoquinone + NADPH + (n+1) H(+)(in) = a plastoquinol + NADP(+) + n H(+)(out). Its function is as follows. NDH-1 shuttles electrons from an unknown electron donor, via FMN and iron-sulfur (Fe-S) centers, to quinones in the respiratory and/or the photosynthetic chain. The immediate electron acceptor for the enzyme in this species is believed to be plastoquinone. Couples the redox reaction to proton translocation, and thus conserves the redox energy in a proton gradient. This is NAD(P)H-quinone oxidoreductase subunit I from Prochlorococcus marinus (strain MIT 9303).